A 353-amino-acid chain; its full sequence is MSKFSYLQNGKASTNGVPHANGHHQQHQNGHSNGVARNGGTATDTLPVAYQQKAATSGPFHMPRTEHVGYTYDTLQEIATYLLERTELRPKVGIICGSGLGTLAEQLTDVDSFDYETIPHFPVSTVAGHVGRLVFGYLAGVPVMCMQGRFHHYEGYPLAKCAMPVRVMHLIGCTHLIATNAAGGANPKYRVGDIMLIKDHINLMGFAGNNPLQGPNDERFGPRFFGMANTYDPKLNQQAKVIARQIGIENELREGVYTCLGGPNFETVAEVKMLSMLGVDAIGMSTVHEIITARHCGMTCFAFSLITNMCTMSYEEEEEHCHDSIVGVGKNREKTLGEFVSRIVKHIHYEAKK.

The span at 1 to 16 shows a compositional bias: polar residues; that stretch reads MSKFSYLQNGKASTNG. Positions 1–42 are disordered; sequence MSKFSYLQNGKASTNGVPHANGHHQQHQNGHSNGVARNGGTA. Phosphate is bound by residues Ser98, His129, 149–151, and Ala181; that span reads RFH. Glu266 serves as a coordination point for a purine D-ribonucleoside. Ser285 is a binding site for phosphate. Asn308 serves as a coordination point for a purine D-ribonucleoside.

This sequence belongs to the PNP/MTAP phosphorylase family. Homotrimer.

The enzyme catalyses inosine + phosphate = alpha-D-ribose 1-phosphate + hypoxanthine. It carries out the reaction guanosine + phosphate = alpha-D-ribose 1-phosphate + guanine. The catalysed reaction is 2'-deoxyguanosine + phosphate = 2-deoxy-alpha-D-ribose 1-phosphate + guanine. It catalyses the reaction 2'-deoxyinosine + phosphate = 2-deoxy-alpha-D-ribose 1-phosphate + hypoxanthine. Its pathway is purine metabolism; purine nucleoside salvage. Inhibited by 5'-deaza-1'-aza-2c-deoxy-1'-(9-methylene) immucillin-H (DADMe-ImmH). Its function is as follows. As part of the purine salvage pathway, catalyzes the phosphorolytic breakdown of the N-glycosidic bond in the beta-(deoxy)ribonucleoside molecules, with the formation of the corresponding free purine bases and pentose-1-phosphate. Preferentially acts on 2'-deoxyinosine and inosine, and to a lesser extent on 2'-deoxyguanosine and guanosine. Has no activity towards adenosine or 2'-deoxyadenosine. The polypeptide is Purine nucleoside phosphorylase (Anopheles gambiae (African malaria mosquito)).